Reading from the N-terminus, the 895-residue chain is Endochitinase 2 (895 aa).

A signal peptide spans 1–22 (MGLTNILAAFIAVSSLFIQSLA). The GH18 domain maps to 29 to 340 (SNLAVYWGQG…DIMKEVLLRC (312 aa)). Asparagine 90 is a glycosylation site (N-linked (GlcNAc...) asparagine). The active-site Proton donor is the glutamate 175. The disordered stretch occupies residues 343 to 712 (DPPTSTVTST…APSSSTTEDR (370 aa)). Over residues 346 to 425 (TSTVTSTISA…ISTRSASTET (80 aa)) the composition is skewed to low complexity. Residues 426–478 (VTTRSQEPPSTTISTRPASTETVTTRSQEPPSSTISTRSASTETVTTRSQEPP) show a composition bias toward polar residues. Over residues 479-505 (SSTISTRSASTETSTSSQDSPSTTIST) the composition is skewed to low complexity. Residues 506–543 (KSAPTGTVTTRSQDLPSTTISTRSPETETETVTTKSQD) show a composition bias toward polar residues. Low complexity predominate over residues 544 to 555 (SPSITLSTRSSS). The span at 556–577 (AETVSTRSQHSSSTTISTKSAP) shows a compositional bias: polar residues. A compositionally biased stretch (low complexity) spans 578-589 (TETGTTSEHSTS). Polar residues predominate over residues 590–657 (MPVSTRSAST…ISTELPSQTH (68 aa)). Low complexity-rich tracts occupy residues 658 to 692 (STTD…APTT) and 699 to 712 (TLTL…TEDR). Glycine 866 is lipidated: GPI-anchor amidated glycine. The propeptide at 867-895 (GAMTVRSMDVVAKALITAGAAVLGLFLGL) is removed in mature form.

This sequence belongs to the glycosyl hydrolase 18 family. Chitinase class III subfamily.

The protein resides in the cell membrane. It carries out the reaction Random endo-hydrolysis of N-acetyl-beta-D-glucosaminide (1-&gt;4)-beta-linkages in chitin and chitodextrins.. In terms of biological role, may be associated with endosporulation. The sequence is that of Endochitinase 2 (CTS2) from Coccidioides immitis (strain RS) (Valley fever fungus).